The sequence spans 660 residues: Neurexin-2-beta (660 aa).

Gly residues predominate over residues 1–10 (MPPGGSGQGG). The segment at 1–27 (MPPGGSGQGGCPRRPPALAGPLPPPPP) is disordered. A signal peptide spans 1–46 (MPPGGSGQGGCPRRPPALAGPLPPPPPPPPLPLLLGLLLLLGAAEG). Topologically, residues 47–584 (ARVSSSLSTT…EVIRESSSTT (538 aa)) are extracellular. In terms of domain architecture, Laminin G-like spans 87 to 295 (TTYIFGKGGA…HLRLVGEGPS (209 aa)). Positions 139 and 156 each coordinate Ca(2+). N186 is a glycosylation site (N-linked (GlcNAc...) asparagine). The Ca(2+) site is built by I238 and N240. Residue S350 is glycosylated (O-linked (Xyl...) (heparan sulfate) serine). Disordered stretches follow at residues 408–458 (ATQD…LPPT) and 537–571 (EPRR…RGPP). An N-linked (GlcNAc...) asparagine glycan is attached at N561. The helical transmembrane segment at 585–605 (GMVVGIVAAAALCILILLYAM) threads the bilayer. At 606–660 (YKYRNRDEGSYQVDQSRNYISNSAQSNGAVVKEKAPAAPKTPSKAKKNKDKEYYV) the chain is on the cytoplasmic side. The disordered stretch occupies residues 627–660 (NSAQSNGAVVKEKAPAAPKTPSKAKKNKDKEYYV).

Belongs to the neurexin family. Interacts (via cytoplasmic C-terminal region) with CASK. Specific isoforms bind alpha-dystroglycan and neuroligins NLGN1, NLGN2 and NLGN3. Interacts with CBLN1, CBLN2 and, less avidly, with CBLN4. Interacts with CLSTN3. Post-translationally, O-glycosylated; contains heparan sulfate. Heparan sulfate attachment is required for synapse development by mediating interactions with neuroligins.

Its subcellular location is the presynaptic cell membrane. Its function is as follows. Neuronal cell surface protein that may be involved in cell recognition and cell adhesion. This is Neurexin-2-beta from Mus musculus (Mouse).